Reading from the N-terminus, the 286-residue chain is Fructose-bisphosphate aldolase (286 aa).

S50 provides a ligand contact to D-glyceraldehyde 3-phosphate. Residue D85 is the Proton donor of the active site. Residues H86, D107, E137, and H181 each contribute to the Zn(2+) site. G182 contacts dihydroxyacetone phosphate. A Zn(2+)-binding site is contributed by H209. Dihydroxyacetone phosphate contacts are provided by residues 210 to 212 (GGT) and 231 to 234 (NVNT).

The protein belongs to the class II fructose-bisphosphate aldolase family. Zn(2+) is required as a cofactor.

The enzyme catalyses beta-D-fructose 1,6-bisphosphate = D-glyceraldehyde 3-phosphate + dihydroxyacetone phosphate. It participates in carbohydrate degradation; glycolysis; D-glyceraldehyde 3-phosphate and glycerone phosphate from D-glucose: step 4/4. In terms of biological role, catalyzes the aldol condensation of dihydroxyacetone phosphate (DHAP or glycerone-phosphate) with glyceraldehyde 3-phosphate (G3P) to form fructose 1,6-bisphosphate (FBP) in gluconeogenesis and the reverse reaction in glycolysis. The polypeptide is Fructose-bisphosphate aldolase (fba) (Staphylococcus epidermidis (strain ATCC 35984 / DSM 28319 / BCRC 17069 / CCUG 31568 / BM 3577 / RP62A)).